A 458-amino-acid polypeptide reads, in one-letter code: UDP-glycosyltransferase 76G1 (458 aa).

Catalysis depends on histidine 25, which acts as the Proton acceptor. Histidine 25 is a rebaudioside A binding site. Position 25 (histidine 25) interacts with rubusoside. Asparagine 27 serves as a coordination point for UDP. Residue aspartate 124 is the Charge relay of the active site. Rebaudioside A-binding positions include 146 to 147 (TS) and histidine 155. UDP contacts are provided by residues serine 283, 338 to 339 (WV), and 356 to 364 (HSGWNSTLE). Rebaudioside A contacts are provided by residues tryptophan 359 and 380–381 (DQ).

It belongs to the UDP-glycosyltransferase family. As to quaternary structure, monomer.

It catalyses the reaction steviolbioside + UDP-alpha-D-glucose = rebaudioside B + UDP + H(+). It carries out the reaction stevioside + UDP-alpha-D-glucose = rebaudioside A + UDP + H(+). The catalysed reaction is rebaudioside E + UDP-alpha-D-glucose = rebaudioside D + UDP + H(+). The enzyme catalyses rebaudioside D + UDP-alpha-D-glucose = rebaudioside M + UDP + H(+). Its function is as follows. Involved in the biosynthesis of steviol glycosides in leaves. Converts the di-glycoside steviolbioside to the tri-glycoside rebaudioside B. Converts the tri-glycoside stevioside to the tetra-glycoside rebaudioside A. Converts the tetra-glycoside rebaudioside E to the penta-glycoside rebaudioside D. Converts the penta-glycoside rebaudioside D to the hexa-glycoside rebaudioside M. Can glucosylate rubusoside and rebaudioside A in vitro. This is UDP-glycosyltransferase 76G1 from Stevia rebaudiana (Stevia).